Here is a 285-residue protein sequence, read N- to C-terminus: Acetylglutamate kinase (285 aa).

Substrate-binding positions include 64-65 (GG), Arg86, and Asn181.

This sequence belongs to the acetylglutamate kinase family. ArgB subfamily.

The protein localises to the cytoplasm. It carries out the reaction N-acetyl-L-glutamate + ATP = N-acetyl-L-glutamyl 5-phosphate + ADP. The protein operates within amino-acid biosynthesis; L-arginine biosynthesis; N(2)-acetyl-L-ornithine from L-glutamate: step 2/4. Catalyzes the ATP-dependent phosphorylation of N-acetyl-L-glutamate. The sequence is that of Acetylglutamate kinase from Clostridium beijerinckii (strain ATCC 51743 / NCIMB 8052) (Clostridium acetobutylicum).